We begin with the raw amino-acid sequence, 211 residues long: NADH-quinone oxidoreductase subunit I (211 aa).

4Fe-4S ferredoxin-type domains are found at residues 90 to 119 and 129 to 158; these read RLWE…IDTK and TEYS…HGGE. [4Fe-4S] cluster-binding residues include Cys99, Cys102, Cys105, Cys109, Cys138, Cys141, Cys144, and Cys148.

The protein belongs to the complex I 23 kDa subunit family. NDH-1 is composed of 14 different subunits. Subunits NuoA, H, J, K, L, M, N constitute the membrane sector of the complex. [4Fe-4S] cluster is required as a cofactor.

Its subcellular location is the cell inner membrane. It carries out the reaction a quinone + NADH + 5 H(+)(in) = a quinol + NAD(+) + 4 H(+)(out). Its function is as follows. NDH-1 shuttles electrons from NADH, via FMN and iron-sulfur (Fe-S) centers, to quinones in the respiratory chain. The immediate electron acceptor for the enzyme in this species is believed to be ubiquinone. Couples the redox reaction to proton translocation (for every two electrons transferred, four hydrogen ions are translocated across the cytoplasmic membrane), and thus conserves the redox energy in a proton gradient. This chain is NADH-quinone oxidoreductase subunit I, found in Sulfurimonas denitrificans (strain ATCC 33889 / DSM 1251) (Thiomicrospira denitrificans (strain ATCC 33889 / DSM 1251)).